The chain runs to 699 residues: Elongation factor G (699 aa).

One can recognise a tr-type G domain in the interval 8 to 286 (EKLRNIGIVA…AVIVTYPLPI (279 aa)). GTP-binding positions include 17-24 (AHIDAGKT), 84-88 (DTPGH), and 138-141 (NKMD).

It belongs to the TRAFAC class translation factor GTPase superfamily. Classic translation factor GTPase family. EF-G/EF-2 subfamily.

It is found in the cytoplasm. Catalyzes the GTP-dependent ribosomal translocation step during translation elongation. During this step, the ribosome changes from the pre-translocational (PRE) to the post-translocational (POST) state as the newly formed A-site-bound peptidyl-tRNA and P-site-bound deacylated tRNA move to the P and E sites, respectively. Catalyzes the coordinated movement of the two tRNA molecules, the mRNA and conformational changes in the ribosome. This Aquifex pyrophilus protein is Elongation factor G (fusA).